The sequence spans 700 residues: Acyl-coenzyme A oxidase 3 (700 aa).

The protein belongs to the acyl-CoA oxidase family. In terms of assembly, heteropentamer composed of five different subunits. FAD serves as cofactor.

Its subcellular location is the peroxisome. The catalysed reaction is a 2,3-saturated acyl-CoA + O2 = a (2E)-enoyl-CoA + H2O2. Its pathway is lipid metabolism; peroxisomal fatty acid beta-oxidation. Functionally, oxidizes aliphatic acyl-CoA substrates of different chain lengths such as hexanoyl-CoA, decanoyl-CoA and myristoyl-CoA as well as aromatic/heterocyclic ring-substituted chromogenic substrates, such as furylpropionyl-CoA. Of the above substrates, the efficiency of the enzyme, exhibits the following order: decanoyl-CoA &gt; myristoyl-CoA &gt; hexanoyl-CoA &gt; furyl-propionyl-CoA. The sequence is that of Acyl-coenzyme A oxidase 3 (POX3) from Yarrowia lipolytica (strain CLIB 122 / E 150) (Yeast).